We begin with the raw amino-acid sequence, 206 residues long: Ribosomal RNA large subunit methyltransferase E (206 aa).

S-adenosyl-L-methionine contacts are provided by Gly-60, Trp-62, Asp-80, Asp-96, and Asp-121. The active-site Proton acceptor is Lys-161.

This sequence belongs to the class I-like SAM-binding methyltransferase superfamily. RNA methyltransferase RlmE family.

Its subcellular location is the cytoplasm. The catalysed reaction is uridine(2552) in 23S rRNA + S-adenosyl-L-methionine = 2'-O-methyluridine(2552) in 23S rRNA + S-adenosyl-L-homocysteine + H(+). Specifically methylates the uridine in position 2552 of 23S rRNA at the 2'-O position of the ribose in the fully assembled 50S ribosomal subunit. In Nitrosomonas europaea (strain ATCC 19718 / CIP 103999 / KCTC 2705 / NBRC 14298), this protein is Ribosomal RNA large subunit methyltransferase E.